We begin with the raw amino-acid sequence, 267 residues long: MKYEGWPDEGELVVGKVDDIEDFGVFVDLEQYQDKRGLVHVSEVASGWIKNVRDHVNEDQTVVAKVLGVDESAQQIDLSLKDVNDHQHSDTIQEWKNEQKADKWLTLAFGEDMADDQFRRIANGLLADFGSLYDGFEQAAIHGHEALADTALEDDEIDAIVETARDNVSVPYVTVTGYVSLQSPDGDGVDTIKDALQAAEGNGEVPDEVDLDVTYVGAPEYRLRVQAPNYKTAESALEAAGDRAVDSVTAHDGSGAFHRERQLDDDA.

The S1 motif domain occupies 10–81; it reads GELVVGKVDD…SAQQIDLSLK (72 aa).

Belongs to the eIF-2-alpha family. As to quaternary structure, heterotrimer composed of an alpha, a beta and a gamma chain.

Its function is as follows. eIF-2 functions in the early steps of protein synthesis by forming a ternary complex with GTP and initiator tRNA. The protein is Translation initiation factor 2 subunit alpha of Halobacterium salinarum (strain ATCC 29341 / DSM 671 / R1).